Consider the following 282-residue polypeptide: Shikimate dehydrogenase (NADP(+)) (282 aa).

Residues 18–20 (SRS) and T65 contribute to the shikimate site. The Proton acceptor role is filled by K69. Shikimate-binding residues include N90 and D106. Residues 134–138 (GAGGA), 158–163 (NRTAAR), and I223 each bind NADP(+). Y225 is a binding site for shikimate. Residue G246 participates in NADP(+) binding.

The protein belongs to the shikimate dehydrogenase family. As to quaternary structure, homodimer.

It carries out the reaction shikimate + NADP(+) = 3-dehydroshikimate + NADPH + H(+). It functions in the pathway metabolic intermediate biosynthesis; chorismate biosynthesis; chorismate from D-erythrose 4-phosphate and phosphoenolpyruvate: step 4/7. Its function is as follows. Involved in the biosynthesis of the chorismate, which leads to the biosynthesis of aromatic amino acids. Catalyzes the reversible NADPH linked reduction of 3-dehydroshikimate (DHSA) to yield shikimate (SA). The protein is Shikimate dehydrogenase (NADP(+)) of Methylobacterium radiotolerans (strain ATCC 27329 / DSM 1819 / JCM 2831 / NBRC 15690 / NCIMB 10815 / 0-1).